Here is a 794-residue protein sequence, read N- to C-terminus: Signal transducer and activator of transcription 5A (794 aa).

Position 90 is a phosphotyrosine (Tyr-90). A phosphoserine mark is found at Ser-128 and Ser-193. In terms of domain architecture, SH2 spans 589–686; the sequence is WNDGAILGFV…EVFSKYYTPV (98 aa). At Tyr-682 the chain carries Phosphotyrosine. Tyr-694 carries the post-translational modification Phosphotyrosine; by JAK2. The interval 773 to 794 is disordered; the sequence is DSLDSRLSPPAGLFTSARGSLS. Ser-780 bears the Phosphoserine mark.

It belongs to the transcription factor STAT family. As to quaternary structure, forms a homodimer or a heterodimer with a related family member. Binds NR3C1. Interacts with NCOA1 and SOCS7. Interacts with ERBB4. Interacts with EBF4. Interacts with CD69. Post-translationally, tyrosine phosphorylated in response to KITLG/SCF, IL2, IL3, IL7, IL15, CSF2/GMCSF, GH1, PRL, EPO and THPO. Activated KIT promotes phosphorylation on tyrosine residues and subsequent translocation to the nucleus. Tyrosine phosphorylated in response to constitutively activated FGFR1, FGFR2, FGFR3 and FGFR4. Tyrosine phosphorylation is required for DNA-binding activity and dimerization. Serine phosphorylation is also required for maximal transcriptional activity. Tyrosine phosphorylated in response to signaling via activated FLT3; wild-type FLT3 results in much weaker phosphorylation than constitutively activated mutant FLT3. Alternatively, can be phosphorylated by JAK2 at Tyr-694. ISGylated.

The protein localises to the cytoplasm. It is found in the nucleus. Carries out a dual function: signal transduction and activation of transcription. Mediates cellular responses to the cytokine KITLG/SCF and other growth factors. Mediates cellular responses to ERBB4. May mediate cellular responses to activated FGFR1, FGFR2, FGFR3 and FGFR4. Binds to the GAS element and activates PRL-induced transcription. Regulates the expression of milk proteins during lactation. This is Signal transducer and activator of transcription 5A (STAT5A) from Homo sapiens (Human).